Here is a 208-residue protein sequence, read N- to C-terminus: ATP-dependent Clp protease proteolytic subunit (208 aa).

Residue serine 105 is the Nucleophile of the active site. Histidine 130 is a catalytic residue.

This sequence belongs to the peptidase S14 family. In terms of assembly, fourteen ClpP subunits assemble into 2 heptameric rings which stack back to back to give a disk-like structure with a central cavity, resembling the structure of eukaryotic proteasomes.

The protein localises to the cytoplasm. It carries out the reaction Hydrolysis of proteins to small peptides in the presence of ATP and magnesium. alpha-casein is the usual test substrate. In the absence of ATP, only oligopeptides shorter than five residues are hydrolyzed (such as succinyl-Leu-Tyr-|-NHMec, and Leu-Tyr-Leu-|-Tyr-Trp, in which cleavage of the -Tyr-|-Leu- and -Tyr-|-Trp bonds also occurs).. Its function is as follows. Cleaves peptides in various proteins in a process that requires ATP hydrolysis. Has a chymotrypsin-like activity. Plays a major role in the degradation of misfolded proteins. In Xylella fastidiosa (strain 9a5c), this protein is ATP-dependent Clp protease proteolytic subunit.